The primary structure comprises 421 residues: Serine hydroxymethyltransferase (421 aa).

Residues L123 and 127 to 129 (GHL) each bind (6S)-5,6,7,8-tetrahydrofolate. K232 carries the post-translational modification N6-(pyridoxal phosphate)lysine.

Belongs to the SHMT family. In terms of assembly, homodimer. The cofactor is pyridoxal 5'-phosphate.

It is found in the cytoplasm. It catalyses the reaction (6R)-5,10-methylene-5,6,7,8-tetrahydrofolate + glycine + H2O = (6S)-5,6,7,8-tetrahydrofolate + L-serine. It functions in the pathway one-carbon metabolism; tetrahydrofolate interconversion. Its pathway is amino-acid biosynthesis; glycine biosynthesis; glycine from L-serine: step 1/1. Its function is as follows. Catalyzes the reversible interconversion of serine and glycine with tetrahydrofolate (THF) serving as the one-carbon carrier. This reaction serves as the major source of one-carbon groups required for the biosynthesis of purines, thymidylate, methionine, and other important biomolecules. Also exhibits THF-independent aldolase activity toward beta-hydroxyamino acids, producing glycine and aldehydes, via a retro-aldol mechanism. This Ehrlichia ruminantium (strain Gardel) protein is Serine hydroxymethyltransferase.